We begin with the raw amino-acid sequence, 827 residues long: Disintegrin and metalloproteinase domain-containing protein 17 (827 aa).

An N-terminal signal peptide occupies residues 1–17 (MRQRLLFLTTLVPFVLA). Positions 18–214 (PRPPEEPGSG…SEEFVRRVKR (197 aa)) are excised as a propeptide. N-linked (GlcNAc...) asparagine glycosylation occurs at Asn-157. Residues 182 to 189 (KVCGYLNA) carry the Cysteine switch motif. Residue Cys-184 participates in Zn(2+) binding. The Extracellular portion of the chain corresponds to 215–671 (RAEPNPLKNT…NTFGKFLADN (457 aa)). The Peptidase M12B domain occupies 223 to 474 (NTCKLLVVAD…KAQECFQERS (252 aa)). 3 disulfide bridges follow: Cys-225–Cys-333, Cys-365–Cys-469, and Cys-423–Cys-453. Asn-264 carries N-linked (GlcNAc...) asparagine glycosylation. Residue His-405 coordinates Zn(2+). Residue Glu-406 is part of the active site. Zn(2+) is bound by residues His-409 and His-415. N-linked (GlcNAc...) asparagine glycans are attached at residues Asn-452, Asn-498, Asn-539, and Asn-551. The Disintegrin domain maps to 475-563 (NKVCGNSRVD…ECPPPGDAED (89 aa)). Intrachain disulfides connect Cys-534–Cys-555, Cys-573–Cys-582, Cys-578–Cys-591, and Cys-593–Cys-600. The tract at residues 603–671 (CCRNLSGPCV…NTFGKFLADN (69 aa)) is crambin-like. The N-linked (GlcNAc...) asparagine glycan is linked to Asn-606. Residues 672 to 692 (IVGSVLVFSLIFWIPFSILVH) form a helical membrane-spanning segment. The Cytoplasmic segment spans residues 693 to 827 (CVDKKLDKQY…SRVDSKETEC (135 aa)). An SH3-binding motif is present at residues 731–738 (PAPQTPGR). Residue Thr-735 is modified to Phosphothreonine; by MAPK14. Thr-764 carries the post-translational modification Phosphothreonine. Residues 766–827 (QEDPSTDSHV…SRVDSKETEC (62 aa)) are disordered. Ser-770 is modified (phosphoserine). Basic and acidic residues-rich tracts occupy residues 771–784 (TDSH…EKDP), 794–810 (SFED…EKAA), and 818–827 (SRVDSKETEC). Phosphoserine occurs at positions 794 and 822.

Interacts with MAD2L1, MAPK14 and MUC1. Interacts with iRhom1/RHBDF1 and iRhom2/RHBDF2. Interacts with FRMD8 via its interaction with iRhom1/RHBDF1 and iRhom2/RHBDF2. Interacts with TSPAN8. The cofactor is Zn(2+). Post-translationally, the precursor is cleaved by a furin endopeptidase. Phosphorylated. Stimulation by growth factor or phorbol 12-myristate 13-acetate induces phosphorylation of Ser-822 but decreases phosphorylation of Ser-794. Phosphorylation at Thr-735 by MAPK14 is required for ADAM17-mediated ectodomain shedding.

It is found in the membrane. It carries out the reaction Narrow endopeptidase specificity. Cleaves Pro-Leu-Ala-Gln-Ala-|-Val-Arg-Ser-Ser-Ser in the membrane-bound, 26-kDa form of tumor necrosis factor alpha (TNFalpha). Similarly cleaves other membrane-anchored, cell-surface proteins to 'shed' the extracellular domains.. Transmembrane metalloprotease which mediates the ectodomain shedding of a myriad of transmembrane proteins including adhesion proteins, growth factor precursors and cytokines important for inflammation and immunity. Cleaves the membrane-bound precursor of TNF-alpha to its mature soluble form. Responsible for the proteolytical release of soluble JAM3 from endothelial cells surface. Responsible for the proteolytic release of several other cell-surface proteins, including p75 TNF-receptor, interleukin 1 receptor type II, p55 TNF-receptor, transforming growth factor-alpha, L-selectin, growth hormone receptor, MUC1 and the amyloid precursor protein. Acts as an activator of Notch pathway by mediating cleavage of Notch, generating the membrane-associated intermediate fragment called Notch extracellular truncation (NEXT). Plays a role in the proteolytic processing of ACE2. Plays a role in hemostasis through shedding of GP1BA, the platelet glycoprotein Ib alpha chain. Mediates the proteolytic cleavage of LAG3, leading to release the secreted form of LAG3. Mediates the proteolytic cleavage of IL6R, leading to the release of secreted form of IL6R. Mediates the proteolytic cleavage and shedding of FCGR3A upon NK cell stimulation, a mechanism that allows for increased NK cell motility and detachment from opsonized target cells. Cleaves TREM2, resulting in shedding of the TREM2 ectodomain. This is Disintegrin and metalloproteinase domain-containing protein 17 (Adam17) from Rattus norvegicus (Rat).